A 419-amino-acid polypeptide reads, in one-letter code: MATEYWSRHLRSVLAPLFAAAGTYSPEDQESHLAFIDEHIAPNLGPLPWEPHGPYSTPSSLVGSPFDPSINIVSSGKAKVRFDFDVISPPDRTGPDPFAEGSAREILHRLADLVGADTQWMGYLMDALYLTPAEAEVAKTKLPPGVAIPPSSVGFDFDGPERTLKFYIPSVRKALATGQDVSELMLKTLRGLQPLGSELVPAMDLIASYLSTRTNDAMLPLVGIDCLDPRTHKNARVKCYLHTSSNSFAVVRDVLTLGGRLSDDTSLKRVETLKSVWPLLINELEGPQSDAATMDESWSKPERLNRTGYSGIQYTIEITPGQAIPDTKIYVPLFQYTDSSEVAERNFESALKKLGNEWGLSGKYRSVMQEIFKDVENYGQTYASFSYTEGKGVYTTSYVAMPIKDEGGGSLAGDFGFRN.

58–59 (PS) contacts L-tryptophan. The substrate site is built by Arg81, Lys165, Tyr167, Arg236, Lys238, Tyr240, Tyr330, and Tyr394.

This sequence belongs to the tryptophan dimethylallyltransferase family.

It catalyses the reaction didemethylasterriquinone D + dimethylallyl diphosphate = asterriquinone C1 + diphosphate. It functions in the pathway secondary metabolite biosynthesis. Its function is as follows. Indole prenyltransferase; part of the gene cluster that mediates the biosynthesis of terrequinone A, an antitumor agent. The first step in the biosynthetic pathway for terrequinone A is formation of indole pyruvic acid (IPA) from L-tryptophan by the aminotransferase tdiD. The nonribosomal peptide synthase tdiA then immediately converts unstable IPA to didemethylasterriquinone D (DDAQ D), via condensation of 2 IPA molecules. The symmetric connectivity of the 2 IPA molecules is thought to arise by head-to-tail dual Claisen condensations facilitated by the TE domain. TdiB then catalyzes reverse prenylation by transferring dimethylallyl diphosphate to carbon atom 2' of DDAQ D, to yield asterriquinone C-1. Finally, tdiC and tdiE enzymes robustly convert asterriquinone C-1 to terrequinone A via a transformation involving regular prenylation at carbon atom 5, which requires elimination of the hydroxy group on C-5. This is Indole prenyltransferase tdiB from Emericella nidulans (strain FGSC A4 / ATCC 38163 / CBS 112.46 / NRRL 194 / M139) (Aspergillus nidulans).